The sequence spans 816 residues: Oxysterol-binding protein-related protein 1D (816 aa).

A PH domain is found at 92–229; sequence GAGVAGIMYK…WVEAFQVAKD (138 aa). The stretch at 290-321 forms a coiled coil; sequence KHIILLDTLRQLETEKIELEATVVDETKEHDS. The tract at residues 340–362 is disordered; sequence SASDSEADNESQDGADVESDEDD. The span at 344–362 shows a compositional bias: acidic residues; it reads SEADNESQDGADVESDEDD. A coiled-coil region spans residues 735-764; it reads NGEYESANAEKLRLEQLQRQARRLQEKGWK.

The protein belongs to the OSBP family. As to expression, expressed in roots, leaves, stems and flowers.

May be involved in the transport of sterols. This Arabidopsis thaliana (Mouse-ear cress) protein is Oxysterol-binding protein-related protein 1D (ORP1D).